We begin with the raw amino-acid sequence, 179 residues long: Large ribosomal subunit protein uL5 (179 aa).

It belongs to the universal ribosomal protein uL5 family. As to quaternary structure, part of the 50S ribosomal subunit; part of the 5S rRNA/L5/L18/L25 subcomplex. Contacts the 5S rRNA and the P site tRNA. Forms a bridge to the 30S subunit in the 70S ribosome.

Its function is as follows. This is one of the proteins that bind and probably mediate the attachment of the 5S RNA into the large ribosomal subunit, where it forms part of the central protuberance. In the 70S ribosome it contacts protein S13 of the 30S subunit (bridge B1b), connecting the 2 subunits; this bridge is implicated in subunit movement. Contacts the P site tRNA; the 5S rRNA and some of its associated proteins might help stabilize positioning of ribosome-bound tRNAs. The chain is Large ribosomal subunit protein uL5 from Vibrio vulnificus (strain CMCP6).